The sequence spans 421 residues: O-glycoside alpha-1,2-mannosyltransferase homolog 5 (421 aa).

Glu318 functions as the Nucleophile in the catalytic mechanism.

It belongs to the glycosyltransferase 15 family.

It localises to the cytoplasm. Probable mannosyltransferase involved in O-glycosylation of cell wall and secreted proteins. This chain is O-glycoside alpha-1,2-mannosyltransferase homolog 5 (omh5), found in Schizosaccharomyces pombe (strain 972 / ATCC 24843) (Fission yeast).